A 314-amino-acid chain; its full sequence is Porphobilinogen deaminase (314 aa).

An S-(dipyrrolylmethanemethyl)cysteine modification is found at Cys242.

The protein belongs to the HMBS family. As to quaternary structure, monomer. It depends on dipyrromethane as a cofactor.

The enzyme catalyses 4 porphobilinogen + H2O = hydroxymethylbilane + 4 NH4(+). Its pathway is porphyrin-containing compound metabolism; protoporphyrin-IX biosynthesis; coproporphyrinogen-III from 5-aminolevulinate: step 2/4. Tetrapolymerization of the monopyrrole PBG into the hydroxymethylbilane pre-uroporphyrinogen in several discrete steps. The polypeptide is Porphobilinogen deaminase (hemC) (Buchnera aphidicola subsp. Acyrthosiphon pisum (strain APS) (Acyrthosiphon pisum symbiotic bacterium)).